The primary structure comprises 166 residues: Large ribosomal subunit protein uL10 (166 aa).

The protein belongs to the universal ribosomal protein uL10 family. Part of the ribosomal stalk of the 50S ribosomal subunit. The N-terminus interacts with L11 and the large rRNA to form the base of the stalk. The C-terminus forms an elongated spine to which L12 dimers bind in a sequential fashion forming a multimeric L10(L12)X complex.

Forms part of the ribosomal stalk, playing a central role in the interaction of the ribosome with GTP-bound translation factors. This is Large ribosomal subunit protein uL10 from Streptococcus pneumoniae serotype 19F (strain G54).